A 389-amino-acid chain; its full sequence is Putative F-box protein At3g10240 (389 aa).

The segment at 1-26 (MEQQEEKRKIKAYQRKSKRSKSGSSS) is disordered. Residues 9 to 21 (KIKAYQRKSKRSK) are compositionally biased toward basic residues. An F-box domain is found at 21–66 (KSGSSSIPLDLVSEILLRLPEKSVARFRCVSKPWSSITTEPYFINL).

This chain is Putative F-box protein At3g10240, found in Arabidopsis thaliana (Mouse-ear cress).